The chain runs to 288 residues: Phosphatidylserine decarboxylase proenzyme (288 aa).

Active-site charge relay system; for autoendoproteolytic cleavage activity residues include aspartate 90, histidine 147, and serine 254. The active-site Schiff-base intermediate with substrate; via pyruvic acid; for decarboxylase activity is serine 254. At serine 254 the chain carries Pyruvic acid (Ser); by autocatalysis.

This sequence belongs to the phosphatidylserine decarboxylase family. PSD-B subfamily. Prokaryotic type I sub-subfamily. Heterodimer of a large membrane-associated beta subunit and a small pyruvoyl-containing alpha subunit. Requires pyruvate as cofactor. In terms of processing, is synthesized initially as an inactive proenzyme. Formation of the active enzyme involves a self-maturation process in which the active site pyruvoyl group is generated from an internal serine residue via an autocatalytic post-translational modification. Two non-identical subunits are generated from the proenzyme in this reaction, and the pyruvate is formed at the N-terminus of the alpha chain, which is derived from the carboxyl end of the proenzyme. The autoendoproteolytic cleavage occurs by a canonical serine protease mechanism, in which the side chain hydroxyl group of the serine supplies its oxygen atom to form the C-terminus of the beta chain, while the remainder of the serine residue undergoes an oxidative deamination to produce ammonia and the pyruvoyl prosthetic group on the alpha chain. During this reaction, the Ser that is part of the protease active site of the proenzyme becomes the pyruvoyl prosthetic group, which constitutes an essential element of the active site of the mature decarboxylase.

Its subcellular location is the cell membrane. The enzyme catalyses a 1,2-diacyl-sn-glycero-3-phospho-L-serine + H(+) = a 1,2-diacyl-sn-glycero-3-phosphoethanolamine + CO2. It functions in the pathway phospholipid metabolism; phosphatidylethanolamine biosynthesis; phosphatidylethanolamine from CDP-diacylglycerol: step 2/2. In terms of biological role, catalyzes the formation of phosphatidylethanolamine (PtdEtn) from phosphatidylserine (PtdSer). This is Phosphatidylserine decarboxylase proenzyme from Hamiltonella defensa subsp. Acyrthosiphon pisum (strain 5AT).